A 271-amino-acid chain; its full sequence is MAVVTTKQLLESGVYFGHATRKWNPKMKPYIFTSRNGIHIINLKKTSEEIEKAYQELLNIITSGGKALFLGTKKQIQSAIREEAQRSQQYYVDHRWLGGTLTNFKTILKRIELLHLLHKQEEEGLWKKLPKKEVVQLKRKRDKLEKFLGGIKDMKDLPQAIFVVDPEKESIAVAEARKLGIKVFGIVDTNCDPDLVDYIIPANDDAIRGVKLIIWLMANACVEGTGGVAEKAETFDAKNPLKPQNYNAPNKRPYQDSPRKPSYQNQNQNQI.

A disordered region spans residues 235-271 (FDAKNPLKPQNYNAPNKRPYQDSPRKPSYQNQNQNQI). A compositionally biased stretch (polar residues) spans 262–271 (SYQNQNQNQI).

Belongs to the universal ribosomal protein uS2 family.

The protein is Small ribosomal subunit protein uS2 of Onion yellows phytoplasma (strain OY-M).